Consider the following 327-residue polypeptide: D-alanine--D-alanine ligase (327 aa).

Residues 113–312 enclose the ATP-grasp domain; it reads KRLWMTHGLA…YEDFVLQVLA (200 aa). 139–194 contributes to the ATP binding site; that stretch reads VADLGLPLIVKPAREGSSIGLTKVTAADQMRAAFDKAAALDNDVIAETFVDGAELT. Mg(2+) is bound by residues aspartate 266, glutamate 279, and asparagine 281.

It belongs to the D-alanine--D-alanine ligase family. The cofactor is Mg(2+). Mn(2+) serves as cofactor.

The protein resides in the cytoplasm. It catalyses the reaction 2 D-alanine + ATP = D-alanyl-D-alanine + ADP + phosphate + H(+). It functions in the pathway cell wall biogenesis; peptidoglycan biosynthesis. In terms of biological role, cell wall formation. This Cupriavidus taiwanensis (strain DSM 17343 / BCRC 17206 / CCUG 44338 / CIP 107171 / LMG 19424 / R1) (Ralstonia taiwanensis (strain LMG 19424)) protein is D-alanine--D-alanine ligase.